Reading from the N-terminus, the 322-residue chain is Phosphoserine phosphatase (322 aa).

A substrate-binding site is contributed by 10–12 (PED). Positions 12, 116, and 118 each coordinate Mg(2+). Asp-116 functions as the Nucleophile in the catalytic mechanism. The active-site Proton donor is Asp-118. Substrate contacts are provided by residues Glu-125, Arg-161, 204–205 (SG), and Lys-249. Residue Asp-272 coordinates Mg(2+). Asn-275 is a binding site for substrate.

It belongs to the HAD-like hydrolase superfamily. SerB family. Mg(2+) serves as cofactor.

It carries out the reaction O-phospho-L-serine + H2O = L-serine + phosphate. The enzyme catalyses O-phospho-D-serine + H2O = D-serine + phosphate. It functions in the pathway amino-acid biosynthesis; L-serine biosynthesis; L-serine from 3-phospho-D-glycerate: step 3/3. Functionally, catalyzes the dephosphorylation of phosphoserine (P-Ser). In Escherichia coli O157:H7, this protein is Phosphoserine phosphatase (serB).